We begin with the raw amino-acid sequence, 334 residues long: Fructose-1,6-bisphosphatase class 1 (334 aa).

Residues Glu-89, Asp-112, Leu-114, and Asp-115 each coordinate Mg(2+). Substrate-binding positions include 115–118 (DGSS), Asn-208, Tyr-241, and Lys-271. Residue Glu-277 coordinates Mg(2+).

This sequence belongs to the FBPase class 1 family. In terms of assembly, homotetramer. It depends on Mg(2+) as a cofactor.

It is found in the cytoplasm. The enzyme catalyses beta-D-fructose 1,6-bisphosphate + H2O = beta-D-fructose 6-phosphate + phosphate. The protein operates within carbohydrate biosynthesis; gluconeogenesis. The sequence is that of Fructose-1,6-bisphosphatase class 1 from Serratia proteamaculans (strain 568).